A 371-amino-acid chain; its full sequence is Ferrochelatase (371 aa).

Positions 218 and 299 each coordinate Fe cation.

Belongs to the ferrochelatase family.

The protein resides in the cytoplasm. The enzyme catalyses heme b + 2 H(+) = protoporphyrin IX + Fe(2+). It functions in the pathway porphyrin-containing compound metabolism; protoheme biosynthesis; protoheme from protoporphyrin-IX: step 1/1. Catalyzes the ferrous insertion into protoporphyrin IX. The sequence is that of Ferrochelatase from Cupriavidus pinatubonensis (strain JMP 134 / LMG 1197) (Cupriavidus necator (strain JMP 134)).